The following is a 348-amino-acid chain: Protein RecA (348 aa).

66 to 73 (GPESSGKT) contacts ATP.

The protein belongs to the RecA family.

The protein resides in the cytoplasm. Its function is as follows. Can catalyze the hydrolysis of ATP in the presence of single-stranded DNA, the ATP-dependent uptake of single-stranded DNA by duplex DNA, and the ATP-dependent hybridization of homologous single-stranded DNAs. It interacts with LexA causing its activation and leading to its autocatalytic cleavage. The chain is Protein RecA from Neisseria gonorrhoeae (strain NCCP11945).